The chain runs to 706 residues: Termination factor NPH-I homolog (706 aa).

The Helicase ATP-binding domain maps to 62–227; sequence IGQGENTRGL…VPCFNMLSGR (166 aa). 75 to 82 provides a ligand contact to ATP; sequence HQMGMGKT. Residues 168-171 carry the DEAH box motif; the sequence is DEAH. Positions 417–599 constitute a Helicase C-terminal domain; it reads QCLQPLKVLE…HLNSAFRDLL (183 aa).

Belongs to the DEAD box helicase family. DEAH subfamily. As to quaternary structure, part of the viral DNA-directed RNA polymerase that consists of 8 polII-like subunits (RPB1, RPB2, RPB3, RPB5, RPB6, RPB7, RPB9, RPB10), a capping enzyme and a termination factor.

The protein localises to the virion. Its function is as follows. Putative DNA-dependent ATPase required for providing the needed energy to achieve the termination of early transcripts. The polypeptide is Termination factor NPH-I homolog (African swine fever virus (isolate Tick/South Africa/Pretoriuskop Pr4/1996) (ASFV)).